Reading from the N-terminus, the 704-residue chain is Ankyrin repeat and LEM domain-containing protein 1 homolog (704 aa).

Residues 1 to 29 are disordered; sequence MPPNGAITTTPRSRMPPTTPSSGKSRPKK. The span at 8 to 22 shows a compositional bias: low complexity; that stretch reads TTTPRSRMPPTTPSS. ANK repeat units lie at residues 28-59 and 63-93; these read KKETLHYLAASSSTTSVDAARTLLERGANVNA and DGATPLHYACTHDNVAMAQLLLTFGADPMSA. Disordered regions lie at residues 247-293, 314-358, and 381-421; these read NEDV…SQET, NAGL…ANTT, and SKSA…TTVD. A compositionally biased stretch (basic residues) spans 276-288; the sequence is RKQRTPVNHHKRS. Composition is skewed to low complexity over residues 329–346 and 384–405; these read EPAIAAVKTPKTPTTPKT and AKSSKLKTPSKPTTSSSTSFSS. Residues 425 to 470 enclose the LEM domain; that stretch reads IRKIRRLREGELKSELKKFGISPAGPLDARTRRLYEKKLLIERRKI. The GIY-YIG domain occupies 525 to 635; that stretch reads YNAFCYLIMD…AVKLKNLRNK (111 aa).

In terms of processing, phosphorylated. Phosphorylated during telophase when localized at the midbody.

The protein resides in the cytoplasm. Its subcellular location is the nucleus. It localises to the chromosome. It is found in the midbody. The protein localises to the cytoskeleton. The protein resides in the spindle. With respect to regulation, inhibited by EDTA. Functionally, endonuclease which, in association with baf-1, plays an essential role during embryogenesis in the DNA repair response following DNA damage probably by ensuring proper chromosome segregation. Also required during postembryonic cell divisions after DNA damage caused by ionizing radiation to ensure normal cell proliferation. Resolves chromatin bridges in late mitosis that result from incomplete DNA replication, defective chromosome condensation or unresolved recombination intermediates. Together with brc-1, contributes to genome integrity by resolving mitotic chromatin bridges that result from incomplete processing of DNA breaks. In parallel to the slx-1/mus-81 pathway, acts in processing early recombination intermediates in meiotic prophase I to prevent illegitimate recombination. Also involved in processing remaining, erroneous recombination intermediates that persist into the second meiotic division. This Caenorhabditis elegans protein is Ankyrin repeat and LEM domain-containing protein 1 homolog.